We begin with the raw amino-acid sequence, 449 residues long: Glucose-6-phosphate isomerase (449 aa).

Catalysis depends on Glu291, which acts as the Proton donor. Active-site residues include His312 and Lys426.

The protein belongs to the GPI family.

The protein localises to the cytoplasm. It catalyses the reaction alpha-D-glucose 6-phosphate = beta-D-fructose 6-phosphate. It participates in carbohydrate biosynthesis; gluconeogenesis. The protein operates within carbohydrate degradation; glycolysis; D-glyceraldehyde 3-phosphate and glycerone phosphate from D-glucose: step 2/4. In terms of biological role, catalyzes the reversible isomerization of glucose-6-phosphate to fructose-6-phosphate. The sequence is that of Glucose-6-phosphate isomerase from Streptococcus thermophilus (strain CNRZ 1066).